The sequence spans 117 residues: Large ribosomal subunit protein uL18 (117 aa).

The protein belongs to the universal ribosomal protein uL18 family. In terms of assembly, part of the 50S ribosomal subunit; part of the 5S rRNA/L5/L18/L25 subcomplex. Contacts the 5S and 23S rRNAs.

This is one of the proteins that bind and probably mediate the attachment of the 5S RNA into the large ribosomal subunit, where it forms part of the central protuberance. This chain is Large ribosomal subunit protein uL18, found in Glaesserella parasuis serovar 5 (strain SH0165) (Haemophilus parasuis).